Reading from the N-terminus, the 139-residue chain is von Hippel-Lindau-like protein (139 aa).

The tract at residues 1 to 22 is disordered; it reads MPWRAGNGVGLEAQAGTQEAGP. Positions 54–135 are beta-domain; sequence SRIIICNHSP…GQPVFANITL (82 aa).

It belongs to the VHL family. Interacts via the beta domain with the ODD domain of HIF1A. This interaction is independent of prolyl hydroxylation of HIF1A. As to expression, abundantly expressed in the placenta.

Functions as a dominant-negative VHL to serve as a protector of HIFalpha. The protein is von Hippel-Lindau-like protein (VHLL) of Homo sapiens (Human).